The sequence spans 656 residues: Translation factor GUF1 homolog, mitochondrial (656 aa).

Residues 1-29 (MLAVRRRGLRVLAVAPLRVRGLATTSTEF) constitute a mitochondrion transit peptide. Residues 54-238 (ERIRNFSIVA…AVVERLPPPV (185 aa)) enclose the tr-type G domain. GTP is bound by residues 63-70 (AHIDHGKS), 131-135 (DTPGH), and 185-188 (TKID).

Belongs to the TRAFAC class translation factor GTPase superfamily. Classic translation factor GTPase family. LepA subfamily.

Its subcellular location is the mitochondrion inner membrane. The catalysed reaction is GTP + H2O = GDP + phosphate + H(+). Promotes mitochondrial protein synthesis. May act as a fidelity factor of the translation reaction, by catalyzing a one-codon backward translocation of tRNAs on improperly translocated ribosomes. Binds to mitochondrial ribosomes in a GTP-dependent manner. This is Translation factor GUF1 homolog, mitochondrial from Phytophthora infestans (strain T30-4) (Potato late blight agent).